A 312-amino-acid polypeptide reads, in one-letter code: Glyoxylate/hydroxypyruvate reductase A (312 aa).

The active site involves R227. The active-site Proton donor is the H275.

It belongs to the D-isomer specific 2-hydroxyacid dehydrogenase family. GhrA subfamily.

The protein resides in the cytoplasm. It catalyses the reaction glycolate + NADP(+) = glyoxylate + NADPH + H(+). The catalysed reaction is (R)-glycerate + NAD(+) = 3-hydroxypyruvate + NADH + H(+). The enzyme catalyses (R)-glycerate + NADP(+) = 3-hydroxypyruvate + NADPH + H(+). Its function is as follows. Catalyzes the NADPH-dependent reduction of glyoxylate and hydroxypyruvate into glycolate and glycerate, respectively. In Escherichia coli O17:K52:H18 (strain UMN026 / ExPEC), this protein is Glyoxylate/hydroxypyruvate reductase A.